The chain runs to 205 residues: Regulator of G-protein signaling 4 (205 aa).

3 S-palmitoyl cysteine lipidation sites follow: cysteine 2, cysteine 12, and cysteine 95. The RGS domain occupies 62–178 (SLENLISHEC…LKSRFYLDLV (117 aa)).

Post-translationally, palmitoylated on Cys-2 and/or Cys-12. Phosphorylated by cyclic GMP-dependent protein kinase.

Functionally, inhibits signal transduction by increasing the GTPase activity of G protein alpha subunits thereby driving them into their inactive GDP-bound form. Activity on G(z)-alpha is inhibited by phosphorylation of the G-protein. Activity on G(z)-alpha and G(i)-alpha-1 is inhibited by palmitoylation of the G-protein. The sequence is that of Regulator of G-protein signaling 4 (RGS4) from Pongo abelii (Sumatran orangutan).